The sequence spans 132 residues: Phosphoribosyl-AMP cyclohydrolase (132 aa).

Residue Asp76 participates in Mg(2+) binding. Cys77 provides a ligand contact to Zn(2+). The Mg(2+) site is built by Asp78 and Asp80. Residues Cys93 and Cys100 each contribute to the Zn(2+) site.

This sequence belongs to the PRA-CH family. Homodimer. Mg(2+) is required as a cofactor. It depends on Zn(2+) as a cofactor.

It is found in the cytoplasm. The enzyme catalyses 1-(5-phospho-beta-D-ribosyl)-5'-AMP + H2O = 1-(5-phospho-beta-D-ribosyl)-5-[(5-phospho-beta-D-ribosylamino)methylideneamino]imidazole-4-carboxamide. It functions in the pathway amino-acid biosynthesis; L-histidine biosynthesis; L-histidine from 5-phospho-alpha-D-ribose 1-diphosphate: step 3/9. Catalyzes the hydrolysis of the adenine ring of phosphoribosyl-AMP. The polypeptide is Phosphoribosyl-AMP cyclohydrolase (Methanobrevibacter smithii (strain ATCC 35061 / DSM 861 / OCM 144 / PS)).